Reading from the N-terminus, the 127-residue chain is Large ribosomal subunit protein bL12 (127 aa).

The protein belongs to the bacterial ribosomal protein bL12 family. As to quaternary structure, homodimer. Part of the ribosomal stalk of the 50S ribosomal subunit. Forms a multimeric L10(L12)X complex, where L10 forms an elongated spine to which 2 to 4 L12 dimers bind in a sequential fashion. Binds GTP-bound translation factors.

Functionally, forms part of the ribosomal stalk which helps the ribosome interact with GTP-bound translation factors. Is thus essential for accurate translation. This chain is Large ribosomal subunit protein bL12, found in Streptomyces avermitilis (strain ATCC 31267 / DSM 46492 / JCM 5070 / NBRC 14893 / NCIMB 12804 / NRRL 8165 / MA-4680).